The chain runs to 234 residues: Glutathione S-transferase sirG (234 aa).

The 85-residue stretch at 15-99 folds into the GST N-terminal domain; the sequence is LYVVKATPTS…YLTDAYDHEG (85 aa). The GST C-terminal domain occupies 105–230; that stretch reads DLWERTQVNN…KALSQKFRPS (126 aa).

It belongs to the GST superfamily.

The catalysed reaction is RX + glutathione = an S-substituted glutathione + a halide anion + H(+). Its pathway is mycotoxin biosynthesis. Functionally, glutathione S-transferase; part of the gene cluster that mediates the biosynthesis of sirodesmin PL, an epipolythiodioxopiperazine (ETP) characterized by a disulfide bridged cyclic dipeptide and that acts as a phytotoxin which is involved in the blackleg didease of canola. SirD catalyzes the O-prenylation of L-tyrosine (L-Tyr) in the presence of dimethylallyl diphosphate (DMAPP) to yield 4-O-dimethylallyl-L-Tyr, and therefore represents probably the first pathway-specific enzyme in the biosynthesis of sirodesmin PL. 4-O-dimethylallyl-L-Tyr, then undergoes condensation with L-Ser in a reaction catalyzed by the non-ribosomal peptide synthase sirP to form the diketopiperazine (DKP) backbone. Further bishydroxylation of the DKP performed by the cytochrome P450 monooxygenase sirC leads to the production of the intermediate phomamide. This step is essential to form the reactive thiol group required for toxicity of sirodesmin PL. The next steps of sirodesmin biosynthesis are not well understood yet, but some predictions could be made from intermediate compounds identification. Phomamide is converted into phomalizarine via oxidation, probably by sirT. Further oxidation, methylation (by sirM or sirN) and reduction steps convert phomalizarine to deacetyl sirodesmin. Finally, acetyltransferase sirH probably acetylates deacetyl sirodesmin to produce sirodesmin PL. The polypeptide is Glutathione S-transferase sirG (Leptosphaeria maculans (Blackleg fungus)).